The sequence spans 668 residues: Eukaryotic translation initiation factor 3 subunit L (668 aa).

Over residues 1–17 (MVADASQQGQSNGAAFN) the composition is skewed to polar residues. Positions 1-42 (MVADASQQGQSNGAAFNQQQQYQQQQQRQLFGGEEEFGDEEE) are disordered. A compositionally biased stretch (low complexity) spans 18–32 (QQQQYQQQQQRQLFG). Residues 33–42 (GEEEFGDEEE) show a composition bias toward acidic residues. A PCI domain is found at 358 to 552 (SFTHILVFIM…QVVNTSDLDF (195 aa)). Residues 625–668 (AGVKAGPPAFSQRSGGAGRSSVNKSAPAPAGAWGSSKPQPSVTA) are disordered. Residues 648-662 (KSAPAPAGAWGSSKP) are compositionally biased toward low complexity.

The protein belongs to the eIF-3 subunit L family. As to quaternary structure, component of the eukaryotic translation initiation factor 3 (eIF-3) complex.

The protein localises to the cytoplasm. Functionally, component of the eukaryotic translation initiation factor 3 (eIF-3) complex, which is involved in protein synthesis of a specialized repertoire of mRNAs and, together with other initiation factors, stimulates binding of mRNA and methionyl-tRNAi to the 40S ribosome. The eIF-3 complex specifically targets and initiates translation of a subset of mRNAs involved in cell proliferation. This chain is Eukaryotic translation initiation factor 3 subunit L, found in Mycosarcoma maydis (Corn smut fungus).